Here is a 1148-residue protein sequence, read N- to C-terminus: Putative transcription factor SEF1 (1148 aa).

The segment at 1–51 is disordered; sequence MVKDNRDSDQDQDFSSAHMKRQPEQQQLQQHQFPSKKQRISHHDDSHQINH. The residue at position 8 (Ser8) is a Phosphoserine. The zn(2)-C6 fungal-type DNA-binding region spans 57–87; sequence CTHCRQHKIKCDASQNFPHPCSRCEKIGLHC. The disordered stretch occupies residues 148 to 180; sequence PTPGTIIPNPDSSPSSGSPTSSAAQRDSKVSVQ. The span at 150–169 shows a compositional bias: low complexity; it reads PGTIIPNPDSSPSSGSPTSS. Ser263 is modified (phosphoserine). The segment at 524–550 is disordered; that stretch reads EESEEDNNDSIDNNNNDKRNKKDEPHV. Positions 538 to 550 are enriched in basic and acidic residues; it reads NNDKRNKKDEPHV. At Ser806 the chain carries Phosphoserine. Residues 1029–1050 are compositionally biased toward polar residues; the sequence is RSQSSMSHSRTPIASKSNNMTD. A disordered region spans residues 1029–1063; the sequence is RSQSSMSHSRTPIASKSNNMTDLHSVVSDPGSSKS.

Its subcellular location is the nucleus. Functionally, putative transcription factor that seems to be involved in the sporulation process. Suppresses the lethal phenotype of RPM2 deletion. The chain is Putative transcription factor SEF1 (SEF1) from Saccharomyces cerevisiae (strain ATCC 204508 / S288c) (Baker's yeast).